The following is a 591-amino-acid chain: Serine/threonine-protein kinase PAK 4 (591 aa).

The CRIB domain maps to 11–24 (ISAPSNFEHRVHTG). The tract at residues 25 to 320 (FDQHEQKFTG…VVDPGDPRSY (296 aa)) is linker. A Phosphoserine modification is found at Ser41. Lys78 carries the N6-methyllysine modification. The tract at residues 95 to 301 (TRSNSLRRDS…PQREPQRVSH (207 aa)) is disordered. Phosphoserine is present on residues Ser104 and Ser148. The segment covering 149–164 (GDRRRAGPEKRPKSSR) has biased composition (basic and acidic residues). Ser167 and Ser181 each carry phosphoserine. Position 187 is a phosphothreonine (Thr187). Residues 191 to 202 (AGLASGAKLAAG) are compositionally biased toward low complexity. Ser195 is modified (phosphoserine). Phosphothreonine is present on Thr207. Over residues 242–260 (SSSSSSRPPTRARGAPSPG) the composition is skewed to low complexity. Ser258 and Ser267 each carry phosphoserine. Residues 271–290 (LAPPACTPAAPAVPGPPGPR) are compositionally biased toward pro residues. Ser291 is modified (phosphoserine). Residues 292-301 (PQREPQRVSH) are compositionally biased toward basic and acidic residues. The GEF-interaction domain (GID) stretch occupies residues 298 to 323 (RVSHEQFRAALQLVVDPGDPRSYLDN). Positions 321 to 572 (LDNFIKIGEG…AAELLKHPFL (252 aa)) constitute a Protein kinase domain. ATP contacts are provided by residues 327 to 335 (IGEGSTGIV), Lys350, and 396 to 398 (EFL). Asp440 serves as the catalytic Proton acceptor. ATP is bound at residue 458-460 (DFG). Ser474 is subject to Phosphoserine; by autocatalysis.

The protein belongs to the protein kinase superfamily. STE Ser/Thr protein kinase family. STE20 subfamily. As to quaternary structure, interacts with FGFR2 and GRB2. Interacts tightly with GTP-bound but not GDP-bound CDC42/p21 and weakly with RAC1. Interacts with INKA1. Interacts with SH3RF2. Interacts with RHOU and PAXI; the PAK4-RHOU complex protects RHOU from ubiquitination and acts as a scaffold to suppport paxillin/PAXI phosphorylation. In terms of processing, autophosphorylated on serine residues when activated by CDC42/p21. Phosphorylated on tyrosine residues upon stimulation of FGFR2. Methylated by SETD6. Polyubiquitinated, leading to its proteasomal degradation. As to expression, highest expression in prostate, testis and colon.

It is found in the cytoplasm. The enzyme catalyses L-seryl-[protein] + ATP = O-phospho-L-seryl-[protein] + ADP + H(+). It carries out the reaction L-threonyl-[protein] + ATP = O-phospho-L-threonyl-[protein] + ADP + H(+). Its activity is regulated as follows. Inhibited by INKA1; which inhibits the serine/threonine-protein kinase activity by binding PAK4 in a substrate-like manner. Its function is as follows. Serine/threonine-protein kinase that plays a role in a variety of different signaling pathways including cytoskeleton regulation, cell adhesion turnover, cell migration, growth, proliferation or cell survival. Activation by various effectors including growth factor receptors or active CDC42 and RAC1 results in a conformational change and a subsequent autophosphorylation on several serine and/or threonine residues. Phosphorylates and inactivates the protein phosphatase SSH1, leading to increased inhibitory phosphorylation of the actin binding/depolymerizing factor cofilin. Decreased cofilin activity may lead to stabilization of actin filaments. Phosphorylates LIMK1, a kinase that also inhibits the activity of cofilin. Phosphorylates integrin beta5/ITGB5 and thus regulates cell motility. Phosphorylates ARHGEF2 and activates the downstream target RHOA that plays a role in the regulation of assembly of focal adhesions and actin stress fibers. Stimulates cell survival by phosphorylating the BCL2 antagonist of cell death BAD. Alternatively, inhibits apoptosis by preventing caspase-8 binding to death domain receptors in a kinase independent manner. Plays a role in cell-cycle progression by controlling levels of the cell-cycle regulatory protein CDKN1A and by phosphorylating RAN. Promotes kinase-independent stabilization of RHOU, thereby contributing to focal adhesion disassembly during cell migration. In Homo sapiens (Human), this protein is Serine/threonine-protein kinase PAK 4.